The sequence spans 46 residues: DNA-directed RNA polymerase subunit Rpo12 (46 aa).

Positions 9, 24, and 27 each coordinate Zn(2+).

This sequence belongs to the archaeal Rpo12/eukaryotic RPC10 RNA polymerase subunit family. As to quaternary structure, part of the RNA polymerase complex. Interacts with Rpo3. Forms an Rpo3-Rpo10-Rpo11-Rpo12 complex upon coexpression. It depends on Zn(2+) as a cofactor.

It localises to the cytoplasm. The catalysed reaction is RNA(n) + a ribonucleoside 5'-triphosphate = RNA(n+1) + diphosphate. DNA-dependent RNA polymerase (RNAP) catalyzes the transcription of DNA into RNA using the four ribonucleoside triphosphates as substrates. This is DNA-directed RNA polymerase subunit Rpo12 from Methanocaldococcus jannaschii (strain ATCC 43067 / DSM 2661 / JAL-1 / JCM 10045 / NBRC 100440) (Methanococcus jannaschii).